Consider the following 179-residue polypeptide: Replication restart protein DnaT (179 aa).

A disordered region spans residues 156–179; that stretch reads GGLPKRDVNTVSEPDSQIPPGFRG.

It belongs to the DnaT family. Homooligomerizes. Interacts with PriB. Component of the replication restart primosome. Primosome assembly occurs via a 'hand-off' mechanism. PriA binds to replication forks, subsequently PriB then DnaT bind; DnaT then displaces ssDNA to generate the helicase loading substrate.

Its function is as follows. Involved in the restart of stalled replication forks, which reloads the replicative helicase on sites other than the origin of replication. Can function in multiple replication restart pathways. Displaces ssDNA from a PriB-ssDNA complex. Probably forms a spiral filament on ssDNA. The chain is Replication restart protein DnaT from Shigella boydii serotype 18 (strain CDC 3083-94 / BS512).